We begin with the raw amino-acid sequence, 553 residues long: Glucose-6-phosphate isomerase (553 aa).

Glu-355 (proton donor) is an active-site residue. Residues His-386 and Lys-513 contribute to the active site.

Belongs to the GPI family.

Its subcellular location is the cytoplasm. The enzyme catalyses alpha-D-glucose 6-phosphate = beta-D-fructose 6-phosphate. It participates in carbohydrate biosynthesis; gluconeogenesis. The protein operates within carbohydrate degradation; glycolysis; D-glyceraldehyde 3-phosphate and glycerone phosphate from D-glucose: step 2/4. Its function is as follows. Catalyzes the reversible isomerization of glucose-6-phosphate to fructose-6-phosphate. This Baumannia cicadellinicola subsp. Homalodisca coagulata protein is Glucose-6-phosphate isomerase.